A 355-amino-acid polypeptide reads, in one-letter code: MQEMQARAQALISESALRSNLTALARQAGTQLLLPVKADAYGHGMEIVARLAARHPAVWGFAVAVPREAATLAALGLGKPILLLTPPTLEEMGPLADLGVRLPVASLAEAEALPAHARAHLKVDTGMNRLGARPEEAVRVGQRLAERGLLEGAYTHFATADEPDLSFARQQFARFQEVLAALPPVLAHAANGGGVLSFGPLPSLSLARPGLASYGFAPAHLRGVAPLTPVMTLQARVTHVHAVYPGESVSYGGLWRATRKTIVATVGIGYADGYPRNATGKACVLVRGECRPVLGRICMDQCMVDVTDLEVRVGDWVEVWGTDKITVTDVAAWGGTVEYEVLTGLGARVERVAAG.

Lys-37 functions as the Proton acceptor; specific for D-alanine in the catalytic mechanism. An N6-(pyridoxal phosphate)lysine modification is found at Lys-37. Arg-129 serves as a coordination point for substrate. Tyr-251 functions as the Proton acceptor; specific for L-alanine in the catalytic mechanism. Met-299 is a binding site for substrate.

This sequence belongs to the alanine racemase family. Pyridoxal 5'-phosphate serves as cofactor.

It catalyses the reaction L-alanine = D-alanine. Its pathway is amino-acid biosynthesis; D-alanine biosynthesis; D-alanine from L-alanine: step 1/1. In terms of biological role, catalyzes the interconversion of L-alanine and D-alanine. May also act on other amino acids. The polypeptide is Alanine racemase (alr) (Deinococcus geothermalis (strain DSM 11300 / CIP 105573 / AG-3a)).